Consider the following 331-residue polypeptide: Probable cytosolic iron-sulfur protein assembly protein Ciao1 (331 aa).

WD repeat units follow at residues 12–51 (GHKG…WTTK), 57–96 (GHKR…ATLE), 97–136 (GHEN…EFEC), 142–181 (AHTQ…SDWD), 188–227 (SHTS…NEAG), 246–285 (QHSR…KRDE), and 297–331 (AHEQ…KLQE).

It belongs to the WD repeat CIA1 family.

Its function is as follows. Essential component of the cytosolic iron-sulfur (Fe/S) protein assembly machinery. Required for the maturation of extramitochondrial Fe/S proteins. The polypeptide is Probable cytosolic iron-sulfur protein assembly protein Ciao1 (Drosophila grimshawi (Hawaiian fruit fly)).